Consider the following 402-residue polypeptide: Serine/threonine-protein kinase US3 homolog (402 aa).

2 disordered regions span residues 1-21 and 46-88; these read MSST…KVHD and FPDS…SPET. The Protein kinase domain maps to 102–386; it reads YNIVSSLPPG…AQDILMLPLF (285 aa). ATP-binding positions include 110–118 and Lys127; that span reads PGSEGYIYV. Residue Asp218 is the Proton acceptor of the active site.

The protein belongs to the protein kinase superfamily. Ser/Thr protein kinase family. In terms of processing, phosphorylated by UL13 homolog; this phosphorylation regulates subsequent phosphorylation of UL31 and UL34 homologs by US3. Autophosphorylated.

The protein localises to the host cytoplasm. Its subcellular location is the host nucleus. It carries out the reaction L-seryl-[protein] + ATP = O-phospho-L-seryl-[protein] + ADP + H(+). The catalysed reaction is L-threonyl-[protein] + ATP = O-phospho-L-threonyl-[protein] + ADP + H(+). In terms of biological role, multifunctional serine/threonine kinase that plays a role in several processes including egress of virus particles from the nucleus, modulation of the actin cytoskeleton and inhibition of apoptosis. Phosphorylates UL31 and UL34 homologs, two critical regulators of capsid budding from nucleus to endoplasmic reticulum, thereby facilitating virion egress. Modulates and redistributes host components of the nuclear envelope, including LMNA, emerin/EMD and the nuclear matrix protein MATR3. Phosphorylates envelope glycoprotein B (gB), probably to direct it to the cell surface. Promotes virus intracellular spread by restructuring host cell cytoskeleton. Blocks host apoptosis to extend cell survival and allow efficient viral replication. Promotes viral gene expression by phosphorylating host HDAC2 to reduce viral genome silencing. This chain is Serine/threonine-protein kinase US3 homolog (US1206), found in Gallid herpesvirus 2 (strain GA) (GaHV-2).